A 308-amino-acid chain; its full sequence is Polyprenal reductase (308 aa).

The Cytoplasmic portion of the chain corresponds to 1–2; it reads MT. The helical transmembrane segment at 3–23 threads the bilayer; the sequence is LLALVWLLLDATFLITLLWHL. The Lumenal portion of the chain corresponds to 24–65; sequence LQGCKSGHSLLCSVFQDLIRYGKTKTGLQRPAWLQWFDIPKR. Residues 66 to 86 traverse the membrane as a helical segment; it reads CFWHFYCVSLIWNGCLLWILL. Residues 87–120 lie on the Cytoplasmic side of the membrane; the sequence is RLLLQSVPVPEWLQLVLHFLHAGSEPQILDRELS. Residues 121 to 141 traverse the membrane as a helical segment; sequence VILALALLWLHSLRRLLECLF. Residues 142-148 are Lumenal-facing; it reads VSVFSNG. A helical membrane pass occupies residues 149–169; it reads VIHLVQYCFGLGYYFLIGITV. At 170-184 the chain is on the cytoplasmic side; it reads LTYCPLDRRTVSTDN. A helical transmembrane segment spans residues 185 to 205; it reads LLTQCHWYHILGLALYIWASL. Residues 206 to 255 are Lumenal-facing; the sequence is HQYRCHCILAGLRKSASGNVINLNHSVPCGDWFERVSCPHYFAELLIYVS. The helical transmembrane segment at 256–276 threads the bilayer; the sequence is IAVVFGLLNTIWWLVVLYVLL. At 277-308 the chain is on the cytoplasmic side; it reads NQALAALLCHEFYHEKFDTYPIHRKAFIPFIF.

The protein belongs to the steroid 5-alpha reductase family. Polyprenal reductase subfamily.

It localises to the endoplasmic reticulum membrane. It catalyses the reaction a di-trans,poly-cis-dolichal + NADP(+) = a di-trans,poly-cis-polyprenal + NADPH + H(+). The catalysed reaction is a 3-oxo-5alpha-steroid + NADP(+) = a 3-oxo-Delta(4)-steroid + NADPH + H(+). The enzyme catalyses androst-4-ene-3,17-dione + NADPH + H(+) = 5alpha-androstan-3,17-dione + NADP(+). It carries out the reaction 17beta-hydroxy-5alpha-androstan-3-one + NADP(+) = testosterone + NADPH + H(+). It participates in protein modification; protein glycosylation. Functionally, plays a key role in early steps of protein N-linked glycosylation by being involved in the conversion of polyprenol into dolichol. Acts as a polyprenal reductase that mediates the reduction of polyprenal into dolichal in a NADP-dependent mechanism. Dolichols are required for the synthesis of dolichol-linked monosaccharides and the oligosaccharide precursor used for N-glycosylation. Also able to convert testosterone (T) into 5-alpha-dihydrotestosterone (DHT). This chain is Polyprenal reductase (srd5a3), found in Xenopus tropicalis (Western clawed frog).